A 422-amino-acid chain; its full sequence is MKISLLGHGKTTLALGRFFKKNHNEVKFFDDKFPAFFKDSEGFLCYPSKDFNPNDSQLEIVSPGISFTHPLVMKAKHLMSEYDYIDSLFDHSFTPTMISISGTNGKTTTTEMLTTLLEDFKAVSGGNIGTPLIELFEKRSPLWVLETSSFSLHYTNKAYPLIYLLINVEADHLTWHCNFENYLNAKLKVLTLMPKTSLAILPLKFKEHPIVQNSQAQKIFFDKSEEVLECLKIPSNALFFKGAFLLDAALALLVYEQFLKIKNLKWQDYRENALKRLNAFKIGSHKMEEFRDKQGRLWVDDSKATNIDATLQALKTFKNQKIHLILGGDIKGVNLTPLFEEFKNYKISLYAIGSSASIIQALALEFNVSCQVCLKLEKAVQEIKSVLLQNEVALLSPSAASLDQFSSYKERGEKFKAFVLKD.

102–108 (GTNGKTT) contacts ATP.

Belongs to the MurCDEF family.

The protein resides in the cytoplasm. The enzyme catalyses UDP-N-acetyl-alpha-D-muramoyl-L-alanine + D-glutamate + ATP = UDP-N-acetyl-alpha-D-muramoyl-L-alanyl-D-glutamate + ADP + phosphate + H(+). It functions in the pathway cell wall biogenesis; peptidoglycan biosynthesis. Functionally, cell wall formation. Catalyzes the addition of glutamate to the nucleotide precursor UDP-N-acetylmuramoyl-L-alanine (UMA). The protein is UDP-N-acetylmuramoylalanine--D-glutamate ligase of Helicobacter pylori (strain J99 / ATCC 700824) (Campylobacter pylori J99).